The chain runs to 610 residues: Peptidyl-prolyl cis-trans isomerase 9 (610 aa).

Phosphoserine is present on serine 13. WD repeat units lie at residues 45 to 83 (MHNA…VEYI), 88 to 127 (AHNA…LVNI), and 177 to 216 (KHTA…QKPD). The PPIase cyclophilin-type domain maps to 453–607 (LGKAAIIHTT…EPTKIINISI (155 aa)).

It belongs to the cyclophilin-type PPIase family.

It is found in the nucleus. The catalysed reaction is [protein]-peptidylproline (omega=180) = [protein]-peptidylproline (omega=0). PPIases accelerate the folding of proteins. It catalyzes the cis-trans isomerization of proline imidic peptide bonds in oligopeptides. The protein is Peptidyl-prolyl cis-trans isomerase 9 (cyp9) of Schizosaccharomyces pombe (strain 972 / ATCC 24843) (Fission yeast).